Consider the following 513-residue polypeptide: MSDKLIIFDTTLRDGEQSPGASMTREEKIRIAKQLERLKVDVIEAGFAASSNGDYEAIRSIAQVVKDSTICSLARANDKDIARAAEALKPANSFRIHTFIATSALHMEKKLRMTPDQVYEQARLAVRFARQFTDDIEFSPEDGSRSDMDFLCRVLEGVIAEGATTINLPDTVGYAVPEGYADLIRSVRERIPNSDKAVWSVHCHNDLGMAVANSLAAVKLGGARQIECTINGLGERAGNTSLEEVVMAVKTRRDYFNLDVGVDTSQIVPASKLVSQITGFVVQPNKAVVGANAFAHASGIHQDGVLKARDTYEIMRAEDVGWTANKIVLGKLSGRNAFKQRLQELGVELESEAEVNAAFGRFKELADQKAEIFDEDIMAIVSNEAQHDANEHYRFISLSQRSETGERPHARVVFNMDGQEHSGEGEGNGPVDATLHAIESQVNSGAEMVLYSVNAITGGTEAQGEVTVRLSKAGRIVNGVGTDPDIVAASAKAYLAALNKLHDKAVQKINPQI.

Residues 5 to 268 enclose the Pyruvate carboxyltransferase domain; the sequence is LIIFDTTLRD…DVGVDTSQIV (264 aa). Residues D14, H202, H204, and N239 each contribute to the Mn(2+) site. The tract at residues 394-513 is regulatory domain; sequence RFISLSQRSE…KAVQKINPQI (120 aa).

The protein belongs to the alpha-IPM synthase/homocitrate synthase family. LeuA type 1 subfamily. Homodimer. Requires Mn(2+) as cofactor.

The protein resides in the cytoplasm. It catalyses the reaction 3-methyl-2-oxobutanoate + acetyl-CoA + H2O = (2S)-2-isopropylmalate + CoA + H(+). Its pathway is amino-acid biosynthesis; L-leucine biosynthesis; L-leucine from 3-methyl-2-oxobutanoate: step 1/4. Catalyzes the condensation of the acetyl group of acetyl-CoA with 3-methyl-2-oxobutanoate (2-ketoisovalerate) to form 3-carboxy-3-hydroxy-4-methylpentanoate (2-isopropylmalate). The chain is 2-isopropylmalate synthase from Cupriavidus pinatubonensis (strain JMP 134 / LMG 1197) (Cupriavidus necator (strain JMP 134)).